The sequence spans 361 residues: Phospho-N-acetylmuramoyl-pentapeptide-transferase (361 aa).

Helical transmembrane passes span 27–47, 72–92, 98–118, 135–155, 169–189, 200–220, 240–260, 263–283, 289–309, and 338–358; these read GAFF…INLL, TPTM…LLWA, YVWL…MDDF, LAMG…LHPE, TLIN…AGSA, GLAI…AYAV, IFVF…YNAP, AVFM…AIAV, IVLV…IIQV, and QIVI…LATL.

It belongs to the glycosyltransferase 4 family. MraY subfamily. Requires Mg(2+) as cofactor.

The protein resides in the cell inner membrane. It catalyses the reaction UDP-N-acetyl-alpha-D-muramoyl-L-alanyl-gamma-D-glutamyl-meso-2,6-diaminopimeloyl-D-alanyl-D-alanine + di-trans,octa-cis-undecaprenyl phosphate = di-trans,octa-cis-undecaprenyl diphospho-N-acetyl-alpha-D-muramoyl-L-alanyl-D-glutamyl-meso-2,6-diaminopimeloyl-D-alanyl-D-alanine + UMP. Its pathway is cell wall biogenesis; peptidoglycan biosynthesis. In terms of biological role, catalyzes the initial step of the lipid cycle reactions in the biosynthesis of the cell wall peptidoglycan: transfers peptidoglycan precursor phospho-MurNAc-pentapeptide from UDP-MurNAc-pentapeptide onto the lipid carrier undecaprenyl phosphate, yielding undecaprenyl-pyrophosphoryl-MurNAc-pentapeptide, known as lipid I. The sequence is that of Phospho-N-acetylmuramoyl-pentapeptide-transferase from Dinoroseobacter shibae (strain DSM 16493 / NCIMB 14021 / DFL 12).